The chain runs to 215 residues: Riboflavin synthase (215 aa).

2 Lumazine-binding repeats span residues 1–96 and 97–193; these read MFTG…FGGH and FVSG…YRFL. Residues 4-6, 47-49, 61-66, 100-102, K135, 144-146, and 158-163 contribute to the 2,4-dihydroxypteridine site; these read GII, CLT, DVMPET, GHV, SLT, and SLIPHT.

In terms of assembly, homotrimer. Can interact with 6,7-dimethyl-8-ribityllumazine synthase, forming a lumazine synthase/riboflavin synthase complex, also designated as 'heavy riboflavin synthase complex', which consists of a trimer of riboflavin synthase enclosed within an icosahedral structure composed of 60 subunits of 6,7-dimethyl-8-ribityllumazine synthase.

The catalysed reaction is 2 6,7-dimethyl-8-(1-D-ribityl)lumazine + H(+) = 5-amino-6-(D-ribitylamino)uracil + riboflavin. The protein operates within cofactor biosynthesis; riboflavin biosynthesis; riboflavin from 2-hydroxy-3-oxobutyl phosphate and 5-amino-6-(D-ribitylamino)uracil: step 2/2. Its activity is regulated as follows. Is activated by sulfite ions. In terms of biological role, catalyzes the dismutation of two molecules of 6,7-dimethyl-8-ribityllumazine, resulting in the formation of riboflavin and 5-amino-6-(D-ribitylamino)uracil. The chain is Riboflavin synthase (ribE) from Bacillus subtilis (strain 168).